The primary structure comprises 326 residues: N-acetyl-gamma-glutamyl-phosphate reductase (326 aa).

Cysteine 155 is a catalytic residue.

This sequence belongs to the NAGSA dehydrogenase family. Type 1 subfamily.

The protein resides in the cytoplasm. It carries out the reaction N-acetyl-L-glutamate 5-semialdehyde + phosphate + NADP(+) = N-acetyl-L-glutamyl 5-phosphate + NADPH + H(+). The protein operates within amino-acid biosynthesis; L-arginine biosynthesis; N(2)-acetyl-L-ornithine from L-glutamate: step 3/4. In terms of biological role, catalyzes the NADPH-dependent reduction of N-acetyl-5-glutamyl phosphate to yield N-acetyl-L-glutamate 5-semialdehyde. This chain is N-acetyl-gamma-glutamyl-phosphate reductase, found in Shewanella baltica (strain OS223).